A 261-amino-acid chain; its full sequence is Ribonuclease HII (261 aa).

The RNase H type-2 domain maps to glutamine 71–serine 259. The a divalent metal cation site is built by aspartate 77, glutamate 78, and aspartate 169.

Belongs to the RNase HII family. The cofactor is Mn(2+). Requires Mg(2+) as cofactor.

It is found in the cytoplasm. It catalyses the reaction Endonucleolytic cleavage to 5'-phosphomonoester.. In terms of biological role, endonuclease that specifically degrades the RNA of RNA-DNA hybrids. This is Ribonuclease HII from Listeria innocua serovar 6a (strain ATCC BAA-680 / CLIP 11262).